The chain runs to 251 residues: Probable transcriptional regulatory protein cgR_1708 (251 aa).

A disordered region spans residues 1–22; the sequence is MAGHSKWATTKHKKAANDAKRG.

Belongs to the TACO1 family.

Its subcellular location is the cytoplasm. In Corynebacterium glutamicum (strain R), this protein is Probable transcriptional regulatory protein cgR_1708.